The primary structure comprises 427 residues: Hydroxylamine reductase (427 aa).

[4Fe-4S] cluster-binding residues include cysteine 3, cysteine 6, cysteine 15, and cysteine 21. Positions 129, 153, 197, 283, 311, 336, 370, and 372 each coordinate hybrid [4Fe-2O-2S] cluster. At cysteine 283 the chain carries Cysteine persulfide.

The protein belongs to the HCP family. The cofactor is [4Fe-4S] cluster. Hybrid [4Fe-2O-2S] cluster serves as cofactor.

It is found in the cytoplasm. The enzyme catalyses A + NH4(+) + H2O = hydroxylamine + AH2 + H(+). Functionally, catalyzes the reduction of hydroxylamine to form NH(3) and H(2)O. The chain is Hydroxylamine reductase from Moorella thermoacetica (strain ATCC 39073 / JCM 9320).